Here is a 447-residue protein sequence, read N- to C-terminus: uncharacterized protein (447 aa).

An FAD-binding PCMH-type domain is found at 29–201 (VDVYPLVFVF…TQYTFKVHRA (173 aa)).

The protein belongs to the oxygen-dependent FAD-linked oxidoreductase family. FAD serves as cofactor.

The protein localises to the spore coat. This is an uncharacterized protein from Bacillus subtilis (strain 168).